A 232-amino-acid polypeptide reads, in one-letter code: 2,3,4,5-tetrahydropyridine-2,6-dicarboxylate N-acetyltransferase (232 aa).

The protein belongs to the transferase hexapeptide repeat family. DapH subfamily.

It catalyses the reaction (S)-2,3,4,5-tetrahydrodipicolinate + acetyl-CoA + H2O = L-2-acetamido-6-oxoheptanedioate + CoA. It participates in amino-acid biosynthesis; L-lysine biosynthesis via DAP pathway; LL-2,6-diaminopimelate from (S)-tetrahydrodipicolinate (acetylase route): step 1/3. In terms of biological role, catalyzes the transfer of an acetyl group from acetyl-CoA to tetrahydrodipicolinate. The polypeptide is 2,3,4,5-tetrahydropyridine-2,6-dicarboxylate N-acetyltransferase (Streptococcus pneumoniae serotype 4 (strain ATCC BAA-334 / TIGR4)).